Reading from the N-terminus, the 136-residue chain is Small ribosomal subunit protein bS16 (136 aa).

This sequence belongs to the bacterial ribosomal protein bS16 family.

This is Small ribosomal subunit protein bS16 from Pseudarthrobacter chlorophenolicus (strain ATCC 700700 / DSM 12829 / CIP 107037 / JCM 12360 / KCTC 9906 / NCIMB 13794 / A6) (Arthrobacter chlorophenolicus).